A 284-amino-acid chain; its full sequence is Pantothenate synthetase (284 aa).

Position 34–41 (34–41) interacts with ATP; the sequence is MGALHAGH. Histidine 41 functions as the Proton donor in the catalytic mechanism. Glutamine 65 contacts (R)-pantoate. A beta-alanine-binding site is contributed by glutamine 65. Position 151–154 (151–154) interacts with ATP; that stretch reads GEKD. Residue glutamine 157 participates in (R)-pantoate binding. ATP contacts are provided by residues leucine 180 and 188–191; that span reads MSSR.

The protein belongs to the pantothenate synthetase family. As to quaternary structure, homodimer.

Its subcellular location is the cytoplasm. It catalyses the reaction (R)-pantoate + beta-alanine + ATP = (R)-pantothenate + AMP + diphosphate + H(+). It participates in cofactor biosynthesis; (R)-pantothenate biosynthesis; (R)-pantothenate from (R)-pantoate and beta-alanine: step 1/1. In terms of biological role, catalyzes the condensation of pantoate with beta-alanine in an ATP-dependent reaction via a pantoyl-adenylate intermediate. The chain is Pantothenate synthetase from Paramagnetospirillum magneticum (strain ATCC 700264 / AMB-1) (Magnetospirillum magneticum).